A 347-amino-acid chain; its full sequence is VIP36-like protein (347 aa).

Residues 1 to 43 form the signal peptide; it reads MAAASRPSWWQRWRRRAWARDGAKLLLFLLLLGSGPGPRHVRA. Residues 44 to 312 lie on the Lumenal side of the membrane; the sequence is GQAVEYLKRE…VPPTPLSGLA (269 aa). Residues 48-273 enclose the L-type lectin-like domain; that stretch reads EYLKREHSLS…DVISLKLFEL (226 aa). Residues S92 and D127 each contribute to the a carbohydrate site. Ca(2+) contacts are provided by D158, Y160, and N162. A carbohydrate is bound at residue 160-162; it reads YPN. N-linked (GlcNAc...) asparagine glycosylation occurs at N180. Residue H187 coordinates a carbohydrate. Residue D190 coordinates Ca(2+). C199 and C236 are oxidised to a cystine. 257–259 lines the a carbohydrate pocket; the sequence is GDL. A helical membrane pass occupies residues 313–335; that stretch reads LFLIVFFSLVFSVFAIVIGIILY. The Cytoplasmic portion of the chain corresponds to 336-347; the sequence is NKWQDQSRKRFY. Residues 343-345 carry the Endoplasmic reticulum retention signal motif; sequence RKR.

The protein resides in the endoplasmic reticulum membrane. It localises to the golgi apparatus membrane. Its function is as follows. May be involved in the regulation of export from the endoplasmic reticulum of a subset of glycoproteins. May function as a regulator of ERGIC-53. The chain is VIP36-like protein (Lman2l) from Mus musculus (Mouse).